We begin with the raw amino-acid sequence, 68 residues long: TxMMSK-03 (68 aa).

A signal peptide spans Met1–Ala19. Residues Val20–Thr50 constitute a propeptide that is removed on maturation. 3 cysteine pairs are disulfide-bonded: Cys53-Cys67, Cys54-Cys63, and Cys59-Cys66. Pro65 is modified (4-hydroxyproline; partial).

Contains 3 disulfide bonds. In terms of tissue distribution, expressed by the venom duct. Both hydroxylated and non-hydroxylated forms are mostly and only present in part 2 (proximal of the venom bulb) of the venom duct, respectively.

The protein resides in the secreted. The sequence is that of TxMMSK-03 from Conus textile (Cloth-of-gold cone).